Consider the following 181-residue polypeptide: Squamosa promoter-binding-like protein 5 (181 aa).

Basic residues predominate over residues 1–10 (MEGQRTQRRG). Residues 1-58 (MEGQRTQRRGYLKDKATVSNLVEEEMENGMDGEEEDGGDEDKRKKVMERVRGPSTDRV) are disordered. Residues 22–39 (VEEEMENGMDGEEEDGGD) show a composition bias toward acidic residues. The segment covering 40-51 (EDKRKKVMERVR) has biased composition (basic and acidic residues). An SBP-type zinc finger spans residues 60–137 (SRLCQVDRCT…AGHNERRRKI (78 aa)). The Zn(2+) site is built by C63, C68, C85, H88, C104, C107, H111, and C123. A Bipartite nuclear localization signal motif is present at residues 120-136 (KRSCRRRLAGHNERRRK). The disordered stretch occupies residues 128 to 181 (AGHNERRRKISGDSFGEGSGRRGFSGQLIQTQERNRVDRKLPMTNSSFKRPQIR). Residues 170 to 181 (MTNSSFKRPQIR) show a composition bias toward polar residues.

Requires Zn(2+) as cofactor. As to expression, expressed in the inflorescence apical meristem and young flowers.

The protein resides in the nucleus. The protein localises to the cytoplasm. Functionally, trans-acting factor that binds specifically to the consensus nucleotide sequence 5'-TNCGTACAA-3' of AP1 promoter. Promotes both vegetative phase change and flowering. In Arabidopsis thaliana (Mouse-ear cress), this protein is Squamosa promoter-binding-like protein 5 (SPL5).